A 301-amino-acid chain; its full sequence is Putative S-adenosyl-L-methionine-dependent methyltransferase BCG_0775c (301 aa).

S-adenosyl-L-methionine is bound by residues Asp130 and 159–160; that span reads DL.

Belongs to the UPF0677 family.

In terms of biological role, exhibits S-adenosyl-L-methionine-dependent methyltransferase activity. In Mycobacterium bovis (strain BCG / Pasteur 1173P2), this protein is Putative S-adenosyl-L-methionine-dependent methyltransferase BCG_0775c.